The chain runs to 158 residues: MNRICHIEIDQTSPIPPTAEIEQERQVAIFDLLEENSFALPVREGRAPAEGPFRLTLAIREGRLVFDIRSEEEEKVGEFHLSLGPFRQVVKDYFQICESYFEAVKRLPPSQIEAIDMARRGIHNEGARVLKERLEGKAEVDIDTARRLFTLICVLHWG.

This sequence belongs to the UPF0262 family.

This is UPF0262 protein Rsph17029_2283 from Cereibacter sphaeroides (strain ATCC 17029 / ATH 2.4.9) (Rhodobacter sphaeroides).